The following is a 123-amino-acid chain: Fluoride-specific ion channel FluC (123 aa).

Transmembrane regions (helical) follow at residues 7-27, 39-59, 68-88, and 101-121; these read MAIA…SGLL, MVNS…FWGF, FFGT…YETF, and LNIL…FMLA. Na(+) is bound by residues Gly-75 and Ser-78.

The protein belongs to the fluoride channel Fluc/FEX (TC 1.A.43) family.

The protein localises to the cell membrane. The catalysed reaction is fluoride(in) = fluoride(out). Its activity is regulated as follows. Na(+) is not transported, but it plays an essential structural role and its presence is essential for fluoride channel function. Fluoride-specific ion channel. Important for reducing fluoride concentration in the cell, thus reducing its toxicity. This is Fluoride-specific ion channel FluC from Thermococcus kodakarensis (strain ATCC BAA-918 / JCM 12380 / KOD1) (Pyrococcus kodakaraensis (strain KOD1)).